The following is a 391-amino-acid chain: S-adenosylmethionine synthase (391 aa).

His-14 contributes to the ATP binding site. Position 16 (Asp-16) interacts with Mg(2+). Glu-42 contacts K(+). Glu-55 and Gln-98 together coordinate L-methionine. The flexible loop stretch occupies residues 98-108; the sequence is QSVDIAMGVDE. ATP-binding positions include 172–174, 238–239, Asp-247, 253–254, Ala-270, and Lys-274; these read DGK, RF, and RK. Asp-247 is an L-methionine binding site. L-methionine is bound at residue Lys-278.

The protein belongs to the AdoMet synthase family. In terms of assembly, homotetramer; dimer of dimers. Mg(2+) serves as cofactor. Requires K(+) as cofactor.

The protein resides in the cytoplasm. It carries out the reaction L-methionine + ATP + H2O = S-adenosyl-L-methionine + phosphate + diphosphate. It participates in amino-acid biosynthesis; S-adenosyl-L-methionine biosynthesis; S-adenosyl-L-methionine from L-methionine: step 1/1. Catalyzes the formation of S-adenosylmethionine (AdoMet) from methionine and ATP. The overall synthetic reaction is composed of two sequential steps, AdoMet formation and the subsequent tripolyphosphate hydrolysis which occurs prior to release of AdoMet from the enzyme. The protein is S-adenosylmethionine synthase of Clostridium botulinum (strain Kyoto / Type A2).